Reading from the N-terminus, the 356-residue chain is Arginine kinase (356 aa).

Ala2 carries the post-translational modification N-acetylalanine. The region spanning 9–91 (KLEAGFKKLE…FDPIIEDYHV (83 aa)) is the Phosphagen kinase N-terminal domain. 64–68 (GVGIY) lines the L-arginine pocket. In terms of domain architecture, Phosphagen kinase C-terminal spans 119–356 (YVISTRVRCG…LELIKMEKEM (238 aa)). Residues 122–126 (STRVR) and His185 contribute to the ATP site. Position 225 (Glu225) interacts with L-arginine. Arg229 lines the ATP pocket. Residue Cys271 coordinates L-arginine. Residues 280 to 284 (RASVH) and 309 to 314 (RGTRGE) contribute to the ATP site. Glu314 is a binding site for L-arginine.

It belongs to the ATP:guanido phosphotransferase family.

It catalyses the reaction L-arginine + ATP = N(omega)-phospho-L-arginine + ADP + H(+). The chain is Arginine kinase from Penaeus monodon (Giant tiger prawn).